The chain runs to 92 residues: UPF0235 protein PF1765 (92 aa).

Belongs to the UPF0235 family.

This is UPF0235 protein PF1765 from Pyrococcus furiosus (strain ATCC 43587 / DSM 3638 / JCM 8422 / Vc1).